The following is a 92-amino-acid chain: C-C motif chemokine 4 (92 aa).

Residues Met-1–Ser-23 form the signal peptide. 2 disulfides stabilise this stretch: Cys-34–Cys-58 and Cys-35–Cys-74.

It belongs to the intercrine beta (chemokine CC) family. Homodimer.

It localises to the secreted. Functionally, monokine with inflammatory and chemokinetic properties. This is C-C motif chemokine 4 (CCL4) from Oryctolagus cuniculus (Rabbit).